Here is a 109-residue protein sequence, read N- to C-terminus: Protein reprimo (109 aa).

N-linked (GlcNAc...) asparagine glycosylation is found at asparagine 7 and asparagine 18. A helical membrane pass occupies residues 56 to 76 (VVQIAVMCVLSLTVVFGIFFL). Serine 98 carries the phosphoserine modification.

Belongs to the reprimo family.

The protein resides in the cytoplasm. It localises to the membrane. Its function is as follows. May be involved in the regulation of p53-dependent G2 arrest of the cell cycle. Seems to induce cell cycle arrest by inhibiting CDK1 activity and nuclear translocation of the CDC2 cyclin B1 complex. The chain is Protein reprimo (Rprm) from Mus musculus (Mouse).